The chain runs to 614 residues: UvrABC system protein C (614 aa).

The region spanning 19-97 is the GIY-YIG domain; that stretch reads SLPGCYLWKN…IKKYNPKFNV (79 aa). In terms of domain architecture, UVR spans 208–243; it reads ERLVADLKKAMMDASSKMEYERAGFLKQRIEKINQL.

Belongs to the UvrC family. Interacts with UvrB in an incision complex.

The protein localises to the cytoplasm. In terms of biological role, the UvrABC repair system catalyzes the recognition and processing of DNA lesions. UvrC both incises the 5' and 3' sides of the lesion. The N-terminal half is responsible for the 3' incision and the C-terminal half is responsible for the 5' incision. This is UvrABC system protein C from Leptospira biflexa serovar Patoc (strain Patoc 1 / Ames).